The primary structure comprises 274 residues: uncharacterized protein (274 aa).

This is an uncharacterized protein from Caenorhabditis elegans.